A 362-amino-acid polypeptide reads, in one-letter code: Cytochrome P450 monooxygenase-like protein avaN (362 aa).

A helical transmembrane segment spans residues 3–23 (VILAIFIAAAGCLFSSWRIYW).

The protein belongs to the cytochrome P450 family.

It is found in the membrane. Its pathway is secondary metabolite biosynthesis. Functionally, cytochrome P450 monooxygenase-like protein; part of the cluster that mediates the biosynthesis of a highly modified cyclo-arginine-tryptophan dipeptide (cRW). The first step of the pathway is perfornmed by the arginine-containing cyclodipeptide synthase (RCPDS) avaA that acts as the scaffold-generating enzyme and is responsible for formation of the cyclo-Arg-Trp (cRW) diketopiperazine. AvaB then acts as a multifunctional flavoenzyme that is responsible for generating the cyclo-Arg-formylkynurenine DKP, which can be deformylated by avaC. AvaB then further catalyzes an additional N-oxidation followed by cyclization and dehydration. The next step is an N-acetylation of the guanidine group catalyzed by the arginine N-acetyltransferase avaD. The roles of the additional enzymes identified within the ava cluster still have to be determined. The protein is Cytochrome P450 monooxygenase-like protein avaN of Aspergillus versicolor.